The sequence spans 669 residues: Carnitine O-palmitoyltransferase 2, mitochondrial (669 aa).

Residues M1–Y36 constitute a mitochondrion transit peptide. Over S37–L190 the chain is Mitochondrial matrix. The note=Mitochondrial inner membrane intramembrane region spans N191–N220. Topologically, residues A221–H669 are mitochondrial matrix. The Proton acceptor role is filled by H384. Position 464–476 (G464–D476) interacts with CoA. (R)-carnitine-binding residues include Y498, S500, and T511.

Belongs to the carnitine/choline acetyltransferase family.

Its subcellular location is the mitochondrion inner membrane. The catalysed reaction is (R)-carnitine + hexadecanoyl-CoA = O-hexadecanoyl-(R)-carnitine + CoA. It catalyses the reaction octanoyl-CoA + (R)-carnitine = O-octanoyl-(R)-carnitine + CoA. It carries out the reaction decanoyl-CoA + (R)-carnitine = O-decanoyl-(R)-carnitine + CoA. The enzyme catalyses dodecanoyl-CoA + (R)-carnitine = O-dodecanoyl-R-carnitine + CoA. The catalysed reaction is tetradecanoyl-CoA + (R)-carnitine = O-tetradecanoyl-(R)-carnitine + CoA. It catalyses the reaction (R)-carnitine + octadecanoyl-CoA = O-octadecanoyl-(R)-carnitine + CoA. It carries out the reaction eicosanoyl-CoA + (R)-carnitine = O-eicosanoyl-(R)-carnitine + CoA. The enzyme catalyses (9Z)-tetradecenoyl-CoA + (R)-carnitine = O-(9Z)-tetradecenoyl-(R)-carnitine + CoA. The catalysed reaction is (5Z)-tetradecenoyl-CoA + (R)-carnitine = O-(5Z)-tetradecenoyl-(R)-carnitine + CoA. It catalyses the reaction (R)-carnitine + (9Z)-octadecenoyl-CoA = O-(9Z)-octadecenoyl-(R)-carnitine + CoA. It carries out the reaction 4,8-dimethylnonanoyl-CoA + (R)-carnitine = O-4,8-dimethylnonanoyl-(R)-carnitine + CoA. Its pathway is lipid metabolism; fatty acid beta-oxidation. Involved in the intramitochondrial synthesis of acylcarnitines from accumulated acyl-CoA metabolites. Reconverts acylcarnitines back into the respective acyl-CoA esters that can then undergo beta-oxidation, an essential step for the mitochondrial uptake of long-chain fatty acids and their subsequent beta-oxidation in the mitochondrion. Active with medium (C8-C12) and long-chain (C14-C18) acyl-CoA esters. This Danio rerio (Zebrafish) protein is Carnitine O-palmitoyltransferase 2, mitochondrial (cpt2).